The following is a 160-amino-acid chain: E3 ubiquitin ligase complex SCF subunit sconC (160 aa).

The interaction with the F-box domain of F-box proteins stretch occupies residues 101-160 (ILAANYLDIKALLDVGCKTVANMIKGKSPEEIRKTFNIQNDFTPEEEDQIRRENEWAEDR).

This sequence belongs to the SKP1 family. Component of the SCF (SKP1-CUL1-F-box protein) E3 ubiquitin ligase complexes.

It functions in the pathway protein modification; protein ubiquitination. Its function is as follows. Essential component of the SCF (SKP1-CUL1-F-box protein) E3 ubiquitin ligase complexes, which mediate the ubiquitination and subsequent proteasomal degradation of target proteins. Controls sulfur metabolite repression, probably by mediating the inactivation or degradation of the metR transcription factor. This is E3 ubiquitin ligase complex SCF subunit sconC (sconC) from Talaromyces stipitatus (strain ATCC 10500 / CBS 375.48 / QM 6759 / NRRL 1006) (Penicillium stipitatum).